A 507-amino-acid chain; its full sequence is Phytoene dehydrogenase (507 aa).

12 to 45 (VVVGAGLAGLAAALHLLGAGRRVTVVEREDVPGG) lines the FAD pocket.

This sequence belongs to the carotenoid/retinoid oxidoreductase family. Requires FAD as cofactor.

It participates in carotenoid biosynthesis; lycopene biosynthesis. Its function is as follows. This enzyme converts phytoene into zeta-carotene via the intermediary of phytofluene by the symmetrical introduction of two double bonds at the C-11 and C-11' positions of phytoene. This chain is Phytoene dehydrogenase (crtI), found in Streptomyces griseus.